We begin with the raw amino-acid sequence, 348 residues long: Carbamoyl phosphate synthase small chain (348 aa).

Residues 1-167 are CPSase; it reads MKRYLITSDG…VKNIRGKGER (167 aa). 3 residues coordinate L-glutamine: S45, G213, and G215. The 181-residue stretch at 168–348 folds into the Glutamine amidotransferase type-1 domain; that stretch reads RILFIDLGSK…RRRTEDAAKG (181 aa). C242 functions as the Nucleophile in the catalytic mechanism. L-glutamine-binding residues include F243, Q246, N282, G284, and Y285. Residues H321 and E323 contribute to the active site.

Belongs to the CarA family. In terms of assembly, composed of two chains; the small (or glutamine) chain promotes the hydrolysis of glutamine to ammonia, which is used by the large (or ammonia) chain to synthesize carbamoyl phosphate. Tetramer of heterodimers (alpha,beta)4.

The catalysed reaction is hydrogencarbonate + L-glutamine + 2 ATP + H2O = carbamoyl phosphate + L-glutamate + 2 ADP + phosphate + 2 H(+). It catalyses the reaction L-glutamine + H2O = L-glutamate + NH4(+). It functions in the pathway amino-acid biosynthesis; L-arginine biosynthesis; carbamoyl phosphate from bicarbonate: step 1/1. It participates in pyrimidine metabolism; UMP biosynthesis via de novo pathway; (S)-dihydroorotate from bicarbonate: step 1/3. Functionally, small subunit of the glutamine-dependent carbamoyl phosphate synthetase (CPSase). CPSase catalyzes the formation of carbamoyl phosphate from the ammonia moiety of glutamine, carbonate, and phosphate donated by ATP, constituting the first step of 2 biosynthetic pathways, one leading to arginine and/or urea and the other to pyrimidine nucleotides. The small subunit (glutamine amidotransferase) binds and cleaves glutamine to supply the large subunit with the substrate ammonia. In Thermoplasma acidophilum (strain ATCC 25905 / DSM 1728 / JCM 9062 / NBRC 15155 / AMRC-C165), this protein is Carbamoyl phosphate synthase small chain.